A 396-amino-acid chain; its full sequence is Elongation factor Tu (396 aa).

Residues 10 to 206 enclose the tr-type G domain; that stretch reads KPHVNVGTIG…ALDSYIPTPE (197 aa). The tract at residues 19 to 26 is G1; it reads GHVDHGKT. 19-26 contributes to the GTP binding site; sequence GHVDHGKT. Position 26 (threonine 26) interacts with Mg(2+). Residues 60 to 64 are G2; that stretch reads GITIN. The tract at residues 81–84 is G3; that stretch reads DCPG. Residues 81 to 85 and 136 to 139 contribute to the GTP site; these read DCPGH and NKCD. The segment at 136-139 is G4; that stretch reads NKCD. The tract at residues 174-176 is G5; it reads SAL.

The protein belongs to the TRAFAC class translation factor GTPase superfamily. Classic translation factor GTPase family. EF-Tu/EF-1A subfamily. Monomer.

It is found in the cytoplasm. It carries out the reaction GTP + H2O = GDP + phosphate + H(+). In terms of biological role, GTP hydrolase that promotes the GTP-dependent binding of aminoacyl-tRNA to the A-site of ribosomes during protein biosynthesis. The chain is Elongation factor Tu from Azoarcus sp. (strain BH72).